The sequence spans 430 residues: Flavin-dependent monooxygenase eupH (430 aa).

Residues 11-14 (AGIG), 33-34 (ER), Gln-43, Arg-107, Tyr-282, and Asp-306 each bind FAD.

It belongs to the aromatic-ring hydroxylase family. FAD serves as cofactor.

It functions in the pathway secondary metabolite biosynthesis; terpenoid biosynthesis. Functionally, flavin-dependent monooxygenase; part of the gene cluster that mediates the biosynthesis of eupenifeldin, a bistropolone meroterpenoid that acts as an antitumor agent. The first step of eupenifeldin biosynthesis is the biosynthesis of 3-methylorcinaldehyde performed by the non-reducing polyketide synthase eupA. Oxidative dearomatization of 3-methylorcinaldehyde likely catalyzed by the FAD-dependent monooxygenase eupB is followed by oxidative ring expansion by the 2-oxoglutarate-dependent dioxygenase eupC to provide the first tropolone metabolite, tropolone stipitaldehyde. In parallel, generation of sesquiterpene alpha-humulene from farnesylpyrophosphate (FPP) is catalyzed by the terpene cyclase eupE. The cytochrome P450 monooxygenase eupD then hydroxylates humulene to humulenol. The putative Diels-Alderase eupF probably catalyzes the formation of the tropolone-humulene skeleton by linking humulenol and the polyketide moiety. The short-chain dehydrogenase/reductase eupG and the flavin-dependent monooxygenase eupH are also essential for eupenifeldin biosynthesis and are likely the additional decorating enzymes of the tropolone-humulene skeleton to produce final eupenifeldin or derivatives. The chain is Flavin-dependent monooxygenase eupH from Phoma sp.